Reading from the N-terminus, the 537-residue chain is Interleukin-2 receptor subunit beta (537 aa).

Positions 1–26 (MATVDLSWRLPLYILLLLLATTWVSA) are cleaved as a signal peptide. Residues 27–239 (AVNDCSHLKC…FRTRPADPKE (213 aa)) lie on the Extracellular side of the membrane. Residues Cys-36 and Cys-46 are joined by a disulfide bond. Residues Asn-43, Asn-55, and Asn-71 are each glycosylated (N-linked (GlcNAc...) asparagine). Cys-74 and Cys-86 are joined by a disulfide. The Fibronectin type-III domain occupies 135-235 (APHSLQVLHI…QPMAFRTRPA (101 aa)). A glycan (N-linked (GlcNAc...) asparagine) is linked at Asn-150. Residues 221–225 (WSPWS) carry the WSXWS motif motif. Residues 240–267 (IFPLPWLRCLLLVLGCFFGFLSCVCVLV) traverse the membrane as a helical segment. Over 268–537 (KCRYLGPWLK…LQAQDSAHLI (270 aa)) the chain is Cytoplasmic. Positions 280-288 (LKCHIPDPS) match the Box 1 motif motif. 2 disordered regions span residues 442 to 466 (AYGNSITPEERPPLSLQEGLPSLAS) and 479 to 498 (ELGDDGEGMSTNSSGQQASV). A compositionally biased stretch (polar residues) spans 487–497 (MSTNSSGQQAS).

Belongs to the type I cytokine receptor family. Type 4 subfamily. In terms of assembly, non-covalent dimer of an alpha and a beta subunit. IL2R exists in 3 different forms: a high affinity dimer, an intermediate affinity monomer (beta subunit), and a low affinity monomer (alpha subunit). The high and intermediate affinity forms also associate with a gamma subunit. Interacts with SHB upon interleukin stimulation.

Its subcellular location is the cell membrane. It localises to the cell surface. Receptor for interleukin-2. This beta subunit is involved in receptor mediated endocytosis and transduces the mitogenic signals of IL2. Probably in association with IL15RA, involved in the stimulation of neutrophil phagocytosis by IL15. The polypeptide is Interleukin-2 receptor subunit beta (Il2rb) (Rattus norvegicus (Rat)).